The following is a 572-amino-acid chain: Laccase-3 (572 aa).

A signal peptide spans 1-18 (MARTTFLVSVSLFVSAVL). Plastocyanin-like domains follow at residues 21–145 (TVEY…LVIY) and 157–304 (IDDE…LIYE). The Cu cation site is built by histidine 82, histidine 84, histidine 127, and histidine 129. A disulfide bridge links cysteine 103 with cysteine 561. Residues asparagine 182, asparagine 228, asparagine 294, asparagine 367, and asparagine 405 are each glycosylated (N-linked (GlcNAc...) asparagine). Residues 422–540 (DMPTLLKILT…EGFAMVFAEA (119 aa)) form the Plastocyanin-like 3 domain. Residues histidine 470, histidine 473, histidine 475, histidine 522, cysteine 523, histidine 524, and histidine 528 each coordinate Cu cation.

It belongs to the multicopper oxidase family. Homodimer. Cu cation is required as a cofactor. In terms of tissue distribution, in mycelia, at a lower level than LCC4.

It is found in the secreted. It carries out the reaction 4 hydroquinone + O2 = 4 benzosemiquinone + 2 H2O. In terms of biological role, lignin degradation and detoxification of lignin-derived products. This Thanatephorus cucumeris (Black scurf of potato) protein is Laccase-3 (LCC3).